The following is a 388-amino-acid chain: Spermidine/putrescine import ATP-binding protein PotA (388 aa).

An ABC transporter domain is found at 17–247 (IEIDHVTKRF…PATVFVANFI (231 aa)). An ATP-binding site is contributed by 49–56 (GPSGCGKT).

Belongs to the ABC transporter superfamily. Spermidine/putrescine importer (TC 3.A.1.11.1) family. As to quaternary structure, the complex is composed of two ATP-binding proteins (PotA), two transmembrane proteins (PotB and PotC) and a solute-binding protein (PotD).

Its subcellular location is the cell membrane. It carries out the reaction ATP + H2O + polyamine-[polyamine-binding protein]Side 1 = ADP + phosphate + polyamineSide 2 + [polyamine-binding protein]Side 1.. Functionally, part of the ABC transporter complex PotABCD involved in spermidine/putrescine import. Responsible for energy coupling to the transport system. The protein is Spermidine/putrescine import ATP-binding protein PotA of Mycobacterium sp. (strain KMS).